Consider the following 105-residue polypeptide: Pyrimidine/purine nucleoside phosphorylase (105 aa).

Belongs to the nucleoside phosphorylase PpnP family.

The enzyme catalyses a purine D-ribonucleoside + phosphate = a purine nucleobase + alpha-D-ribose 1-phosphate. The catalysed reaction is adenosine + phosphate = alpha-D-ribose 1-phosphate + adenine. It carries out the reaction cytidine + phosphate = cytosine + alpha-D-ribose 1-phosphate. It catalyses the reaction guanosine + phosphate = alpha-D-ribose 1-phosphate + guanine. The enzyme catalyses inosine + phosphate = alpha-D-ribose 1-phosphate + hypoxanthine. The catalysed reaction is thymidine + phosphate = 2-deoxy-alpha-D-ribose 1-phosphate + thymine. It carries out the reaction uridine + phosphate = alpha-D-ribose 1-phosphate + uracil. It catalyses the reaction xanthosine + phosphate = alpha-D-ribose 1-phosphate + xanthine. Catalyzes the phosphorolysis of diverse nucleosides, yielding D-ribose 1-phosphate and the respective free bases. Can use uridine, adenosine, guanosine, cytidine, thymidine, inosine and xanthosine as substrates. Also catalyzes the reverse reactions. The sequence is that of Pyrimidine/purine nucleoside phosphorylase from Cupriavidus pinatubonensis (strain JMP 134 / LMG 1197) (Cupriavidus necator (strain JMP 134)).